The following is a 94-amino-acid chain: Cell division topological specificity factor (94 aa).

The protein belongs to the MinE family.

Functionally, prevents the cell division inhibition by proteins MinC and MinD at internal division sites while permitting inhibition at polar sites. This ensures cell division at the proper site by restricting the formation of a division septum at the midpoint of the long axis of the cell. This is Cell division topological specificity factor from Acetivibrio thermocellus (strain ATCC 27405 / DSM 1237 / JCM 9322 / NBRC 103400 / NCIMB 10682 / NRRL B-4536 / VPI 7372) (Clostridium thermocellum).